The sequence spans 181 residues: Large ribosomal subunit protein uL5 (181 aa).

This sequence belongs to the universal ribosomal protein uL5 family. In terms of assembly, part of the 50S ribosomal subunit; part of the 5S rRNA/L5/L18/L25 subcomplex. Contacts the 5S rRNA and the P site tRNA. Forms a bridge to the 30S subunit in the 70S ribosome.

This is one of the proteins that bind and probably mediate the attachment of the 5S RNA into the large ribosomal subunit, where it forms part of the central protuberance. In the 70S ribosome it contacts protein S13 of the 30S subunit (bridge B1b), connecting the 2 subunits; this bridge is implicated in subunit movement. Contacts the P site tRNA; the 5S rRNA and some of its associated proteins might help stabilize positioning of ribosome-bound tRNAs. In Acaryochloris marina (strain MBIC 11017), this protein is Large ribosomal subunit protein uL5.